Here is a 156-residue protein sequence, read N- to C-terminus: Small ribosomal subunit protein uS7 (156 aa).

It belongs to the universal ribosomal protein uS7 family. In terms of assembly, part of the 30S ribosomal subunit. Contacts proteins S9 and S11.

Its function is as follows. One of the primary rRNA binding proteins, it binds directly to 16S rRNA where it nucleates assembly of the head domain of the 30S subunit. Is located at the subunit interface close to the decoding center, probably blocks exit of the E-site tRNA. The polypeptide is Small ribosomal subunit protein uS7 (Rhodospirillum rubrum (strain ATCC 11170 / ATH 1.1.1 / DSM 467 / LMG 4362 / NCIMB 8255 / S1)).